Here is a 257-residue protein sequence, read N- to C-terminus: OCIA domain-containing protein 1 (257 aa).

Disordered regions lie at residues 1–20 (MDSP…PHPL) and 148–257 (YSDE…SWTD). The region spanning 1-110 (MDSPLNDGSH…MRLPNSHLGE (110 aa)) is the OCIA domain. A compositionally biased stretch (polar residues) spans 156–170 (GRSTSLNLDTESRPT). A compositionally biased stretch (basic and acidic residues) spans 204 to 216 (EDLRRRNREEYSK).

The protein belongs to the OCIAD1 family. As to quaternary structure, interacts with STAT3 and ARF1. As to expression, expressed in all cells of the primary lymph gland lobe.

Its subcellular location is the endosome. In terms of biological role, maintains stem cell potency. Involved in endocytic pathways that mediate signaling during hematopoiesis. This Drosophila melanogaster (Fruit fly) protein is OCIA domain-containing protein 1 (asrij).